Here is a 132-residue protein sequence, read N- to C-terminus: NAD(P)H-quinone oxidoreductase subunit 3 (132 aa).

Helical transmembrane passes span 22 to 42 (FLGFLIICSLVPVLALAASAL), 76 to 96 (MFALVFVIFDVETVFLYPWAV), and 101 to 121 (LGLLAFIEALIFIAILVVALV).

The protein belongs to the complex I subunit 3 family. In terms of assembly, NDH-1 can be composed of about 15 different subunits; different subcomplexes with different compositions have been identified which probably have different functions.

Its subcellular location is the cellular thylakoid membrane. The catalysed reaction is a plastoquinone + NADH + (n+1) H(+)(in) = a plastoquinol + NAD(+) + n H(+)(out). It catalyses the reaction a plastoquinone + NADPH + (n+1) H(+)(in) = a plastoquinol + NADP(+) + n H(+)(out). Functionally, NDH-1 shuttles electrons from an unknown electron donor, via FMN and iron-sulfur (Fe-S) centers, to quinones in the respiratory and/or the photosynthetic chain. The immediate electron acceptor for the enzyme in this species is believed to be plastoquinone. Couples the redox reaction to proton translocation, and thus conserves the redox energy in a proton gradient. Cyanobacterial NDH-1 also plays a role in inorganic carbon-concentration. This Thermosynechococcus vestitus (strain NIES-2133 / IAM M-273 / BP-1) protein is NAD(P)H-quinone oxidoreductase subunit 3 (ndhC).